A 518-amino-acid polypeptide reads, in one-letter code: MQYSIKQILSNANDKLNKIGINLPGLEARILLQHVTNKPIEHLLIKLNEQLSEAEIEAFEKLLERRLAHEPIAYIIGVKEFYSREFIVNKHVLIPRIDTEVLVDVVIGLVVSRNNLHMFSKLKSLDSVLTTQSYNILELGTGSGCIAISLLCELPNTNIIATDISVDAIKVAKSNSIKYNVTDRIQIIHSNWFEKLDKQKFDFIVSNPPYISHTEKLKMAIETINYEPSIALFAEEDGLEAYSIIAKNAKQFLKPNGKIILEIGFSQAAKVSKIFLNYGYNIDYIYRDLQSHNRVIEISPINLNRSYARRIGKSLSKMQQKLLDNELPKYLFSKEKFKSEKRKVFLEIGFGMGEHLINQAKINPDTLFIGVEVYLNGVANVLKHSAQHNITNFLLFPNNLDLILNDLPNNSLDGIYILFPDPWIKNKKKKKRIFNKERLKILQNKLKNNGNLVFASDIENYFYEAMALIRQNGNFEIIHNDDYLQPHDNYIITKYHQKAINANRTAKFMILQHALTDH.

The hemK stretch occupies residues 1–300 (MQYSIKQILS…SHNRVIEISP (300 aa)). Residues 1–302 (MQYSIKQILS…NRVIEISPIN (302 aa)) are RF MTase. Residues 140-144 (GTGSG), Asp-163, Trp-192, Asn-207, Glu-347, Glu-372, Asn-399, and Asp-421 contribute to the S-adenosyl-L-methionine site. 207–210 (NPPY) provides a ligand contact to substrate. The tRNA (guanine-N(7)-)-methyltransferase stretch occupies residues 301 to 518 (INLNRSYARR…MILQHALTDH (218 aa)). The tract at residues 305-518 (RSYARRIGKS…MILQHALTDH (214 aa)) is tRNA MTase. Asp-421 is an active-site residue. Positions 425 and 457 each coordinate substrate.

The protein in the C-terminal section; belongs to the class I-like SAM-binding methyltransferase superfamily. TrmB family. This sequence in the N-terminal section; belongs to the protein N5-glutamine methyltransferase family. PrmC subfamily.

The enzyme catalyses L-glutaminyl-[peptide chain release factor] + S-adenosyl-L-methionine = N(5)-methyl-L-glutaminyl-[peptide chain release factor] + S-adenosyl-L-homocysteine + H(+). It carries out the reaction guanosine(46) in tRNA + S-adenosyl-L-methionine = N(7)-methylguanosine(46) in tRNA + S-adenosyl-L-homocysteine. Functionally, methylates the class 1 translation termination release factors RF1/PrfA and RF2/PrfB on the glutamine residue of the universally conserved GGQ motif. Catalyzes the formation of N(7)-methylguanine at position 46 (m7G46) in tRNA. The polypeptide is Bifunctional methyltransferase (prmC/trmB) (Rickettsia prowazekii (strain Madrid E)).